A 157-amino-acid chain; its full sequence is Putative electron transport protein YsaA (157 aa).

4Fe-4S ferredoxin-type domains follow at residues Asn-2–Cys-32, Lys-48–Gly-80, Gly-80–Ser-109, and Lys-112–Val-144. Positions 12, 15, 18, 22, 58, 61, 66, 70, 89, 92, 95, 99, 118, 121, 130, and 134 each coordinate [4Fe-4S] cluster.

The chain is Putative electron transport protein YsaA (ysaA) from Escherichia coli (strain K12).